We begin with the raw amino-acid sequence, 153 residues long: General odorant-binding protein lush (153 aa).

An N-terminal signal peptide occupies residues 1 to 29 (MKHWKRRSSAVFAIVLQVLVLLLPDPAVA). Cystine bridges form between Cys-46–Cys-79, Cys-75–Cys-132, and Cys-121–Cys-141. 1-propanol contacts are provided by Ser-81 and Thr-86. Butan-1-ol-binding residues include Ser-81 and Thr-86. Ser-81 and Thr-86 together coordinate ethanol.

The protein belongs to the PBP/GOBP family. In terms of tissue distribution, specifically expressed in chemosensory system in both males and females. Expressed in a subset of trichoid chemosensory sensilla located on the ventral-lateral surface of the third antennal segment. Secreted from non-neuronal support cells into the sensillum lymph that bathes the olfactory neurons within these sensilla.

Its subcellular location is the secreted. In terms of biological role, odorant-binding protein required for olfactory behavior and for activity of pheromone-sensitive neurons. Binds to alcohols and mediates avoidance behavior to high concentrations of alcohols, the alcohol-binding possibly resulting in activation of receptors on T2B neurons, the activation of these receptors inhibiting these neurons. Acts in concert with Snmp and lush to capture cVA molecules on the surface of Or67d expressing olfactory dendrites and facilitate their transfer to the odorant-receptor Orco complex. Required for cVA response, probably by binding to VA. May act by serving as an adapter that bridges the presence of gaseous pheromone molecules, cVA, to activation of specific neuronal receptors expressed on T1 olfactory neurons, possibly via a specific conformational change induced by cVA that in turn activates T1 receptors. T1 neurons are excited by the pheromone VA, while T2 neurons are inhibited by alcohols. Also binds to phthalates. The polypeptide is General odorant-binding protein lush (lush) (Drosophila melanogaster (Fruit fly)).